The sequence spans 136 residues: NADH-ubiquinone oxidoreductase chain 2 (136 aa).

The next 4 membrane-spanning stretches (helical) occupy residues 12–32 (YFLI…NQSF), 34–54 (FLIP…MWLV), 74–94 (IGPL…WLMV), and 99–119 (FLLM…AVIL).

This sequence belongs to the complex I subunit 2 family.

It localises to the mitochondrion inner membrane. The enzyme catalyses a ubiquinone + NADH + 5 H(+)(in) = a ubiquinol + NAD(+) + 4 H(+)(out). Core subunit of the mitochondrial membrane respiratory chain NADH dehydrogenase (Complex I) that is believed to belong to the minimal assembly required for catalysis. Complex I functions in the transfer of electrons from NADH to the respiratory chain. The immediate electron acceptor for the enzyme is believed to be ubiquinone. This Artemia salina (Brine shrimp) protein is NADH-ubiquinone oxidoreductase chain 2 (ND2).